A 376-amino-acid chain; its full sequence is Fibromodulin (376 aa).

An N-terminal signal peptide occupies residues 1–18 (MQWASILLLRGLCSLSQG). Residue Q19 is modified to Pyrrolidone carboxylic acid. Sulfotyrosine occurs at positions 20, 38, 53, 55, 63, and 65. The LRRNT domain occupies 67-105 (APPPPEPRDCPQECDCPPNFPTAMYCDNRNLKYLPFVPS). 8 LRR repeats span residues 106–127 (RMKY…VFDN), 130–143 (GLLW…QITS), 156–176 (HLER…PLPR), 177–198 (SLRE…ALEG), 201–222 (NLTA…MRGL), 224–245 (SLIL…LPSA), 246–266 (LEQL…YFRG), and 269–289 (KLLY…ATNT). A glycan (N-linked (GlcNAc...) (keratan sulfate) asparagine) is linked at N127. N-linked (GlcNAc...) (keratan sulfate) asparagine glycosylation is present at N166. The N-linked (GlcNAc...) (keratan sulfate) asparagine glycan is linked to N201. N-linked (GlcNAc...) (keratan sulfate) asparagine glycosylation is present at N291. 2 LRR repeats span residues 294–315 (SLLE…NTNL) and 316–335 (ENLY…SFCT). C334 and C367 are joined by a disulfide. Residue N341 is glycosylated (N-linked (GlcNAc...) asparagine). The LRR 11 repeat unit spans residues 344–367 (KLQVLRLDGNEIKRSAMPVDAPLC).

It belongs to the small leucine-rich proteoglycan (SLRP) family. SLRP class II subfamily. As to quaternary structure, binds to type I and type II collagen. Post-translationally, binds keratan sulfate chains.

The protein resides in the secreted. It localises to the extracellular space. The protein localises to the extracellular matrix. In terms of biological role, affects the rate of fibrils formation. May have a primary role in collagen fibrillogenesis. The polypeptide is Fibromodulin (Fmod) (Rattus norvegicus (Rat)).